We begin with the raw amino-acid sequence, 516 residues long: Glycosyltransferase-like protein gnt15 (516 aa).

Topologically, residues 1–24 (MSNFYNNNPRRNTFRLTERIKKKP) are cytoplasmic. Residues 25-45 (YQTLIVFILIFLFLYVFGPFG) form a helical; Signal-anchor for type II membrane protein membrane-spanning segment. The Extracellular portion of the chain corresponds to 46 to 516 (EKKSNNNNNN…NDNCLTREHW (471 aa)). N-linked (GlcNAc...) asparagine glycosylation occurs at Asn-152. The tract at residues 199–250 (DTSNNNNNNNNNNNNNNNNNNNNNNNNNNNNNNNENNDNDNGNNNNNNDNEK) is disordered. Over residues 202 to 246 (NNNNNNNNNNNNNNNNNNNNNNNNNNNNNNNENNDNDNGNNNNNN) the composition is skewed to low complexity. Residues Asn-386 and Asn-412 are each glycosylated (N-linked (GlcNAc...) asparagine).

It belongs to the glycosyltransferase 8 family. Highly divergent.

The protein localises to the membrane. Its function is as follows. May have a role in modulating cell adhesion and glycosylation. Essential for development. This is Glycosyltransferase-like protein gnt15 (gnt15) from Dictyostelium discoideum (Social amoeba).